The chain runs to 388 residues: Succinate--CoA ligase [ADP-forming] subunit beta (388 aa).

An ATP-grasp domain is found at 9-244 (KQIFAEYQLP…PSQEDPREAL (236 aa)). ATP-binding positions include K46, 53 to 55 (GRG), E99, S102, and E107. Mg(2+) is bound by residues N199 and D213. Substrate contacts are provided by residues N264 and 321–323 (GIV).

It belongs to the succinate/malate CoA ligase beta subunit family. In terms of assembly, heterotetramer of two alpha and two beta subunits. The cofactor is Mg(2+).

It catalyses the reaction succinate + ATP + CoA = succinyl-CoA + ADP + phosphate. It carries out the reaction GTP + succinate + CoA = succinyl-CoA + GDP + phosphate. It participates in carbohydrate metabolism; tricarboxylic acid cycle; succinate from succinyl-CoA (ligase route): step 1/1. In terms of biological role, succinyl-CoA synthetase functions in the citric acid cycle (TCA), coupling the hydrolysis of succinyl-CoA to the synthesis of either ATP or GTP and thus represents the only step of substrate-level phosphorylation in the TCA. The beta subunit provides nucleotide specificity of the enzyme and binds the substrate succinate, while the binding sites for coenzyme A and phosphate are found in the alpha subunit. The chain is Succinate--CoA ligase [ADP-forming] subunit beta from Pasteurella multocida (strain Pm70).